The chain runs to 265 residues: NAD kinase (265 aa).

D45 (proton acceptor) is an active-site residue. NAD(+) contacts are provided by residues 45–46 (DG), 121–122 (NE), R147, D149, A184, and Q221.

This sequence belongs to the NAD kinase family. Requires a divalent metal cation as cofactor.

It is found in the cytoplasm. The catalysed reaction is NAD(+) + ATP = ADP + NADP(+) + H(+). Involved in the regulation of the intracellular balance of NAD and NADP, and is a key enzyme in the biosynthesis of NADP. Catalyzes specifically the phosphorylation on 2'-hydroxyl of the adenosine moiety of NAD to yield NADP. This is NAD kinase from Leuconostoc citreum (strain KM20).